Reading from the N-terminus, the 433-residue chain is GTPase Obg (433 aa).

The region spanning 1–159 is the Obg domain; that stretch reads MKFVDSADLI…FEIRAELKVL (159 aa). An OBG-type G domain is found at 160 to 332; that stretch reads ADVGFVGLPN…LLFMIYEELK (173 aa). GTP is bound by residues 166-173, 191-195, 213-216, 284-287, and 313-315; these read GLPNAGKS, FTTIN, DLPG, NKMD, and SGL. Mg(2+) contacts are provided by Ser173 and Thr193. One can recognise an OCT domain in the interval 355-433; that stretch reads KFEEQKEDIQ…VFDYELEWTD (79 aa).

This sequence belongs to the TRAFAC class OBG-HflX-like GTPase superfamily. OBG GTPase family. Monomer. Requires Mg(2+) as cofactor.

It is found in the cytoplasm. Functionally, an essential GTPase which binds GTP, GDP and possibly (p)ppGpp with moderate affinity, with high nucleotide exchange rates and a fairly low GTP hydrolysis rate. Plays a role in control of the cell cycle, stress response, ribosome biogenesis and in those bacteria that undergo differentiation, in morphogenesis control. In Mycoplasma capricolum subsp. capricolum (strain California kid / ATCC 27343 / NCTC 10154), this protein is GTPase Obg.